Reading from the N-terminus, the 320-residue chain is o-succinylbenzoate synthase (320 aa).

The active-site Proton donor is the Lys133. Mg(2+)-binding residues include Asp161, Glu190, and Asp213. Lys235 acts as the Proton acceptor in catalysis.

It belongs to the mandelate racemase/muconate lactonizing enzyme family. MenC type 1 subfamily. The cofactor is a divalent metal cation.

The catalysed reaction is (1R,6R)-6-hydroxy-2-succinyl-cyclohexa-2,4-diene-1-carboxylate = 2-succinylbenzoate + H2O. It functions in the pathway quinol/quinone metabolism; 1,4-dihydroxy-2-naphthoate biosynthesis; 1,4-dihydroxy-2-naphthoate from chorismate: step 4/7. Its pathway is quinol/quinone metabolism; menaquinone biosynthesis. Converts 2-succinyl-6-hydroxy-2,4-cyclohexadiene-1-carboxylate (SHCHC) to 2-succinylbenzoate (OSB). This chain is o-succinylbenzoate synthase, found in Shigella sonnei (strain Ss046).